The chain runs to 319 residues: Putative ribose-phosphate pyrophosphokinase 2 (319 aa).

ATP-binding positions include 40 to 42 (DGE) and 99 to 100 (RQ). H133 is a Mg(2+) binding site. D-ribose 5-phosphate contacts are provided by residues D222 and 226-230 (NTGRT).

Belongs to the ribose-phosphate pyrophosphokinase family. Class I subfamily. As to quaternary structure, homohexamer. Mg(2+) serves as cofactor.

Its subcellular location is the cytoplasm. The enzyme catalyses D-ribose 5-phosphate + ATP = 5-phospho-alpha-D-ribose 1-diphosphate + AMP + H(+). Its pathway is metabolic intermediate biosynthesis; 5-phospho-alpha-D-ribose 1-diphosphate biosynthesis; 5-phospho-alpha-D-ribose 1-diphosphate from D-ribose 5-phosphate (route I): step 1/1. Functionally, involved in the biosynthesis of the central metabolite phospho-alpha-D-ribosyl-1-pyrophosphate (PRPP) via the transfer of pyrophosphoryl group from ATP to 1-hydroxyl of ribose-5-phosphate (Rib-5-P). In Streptococcus pneumoniae serotype 4 (strain ATCC BAA-334 / TIGR4), this protein is Putative ribose-phosphate pyrophosphokinase 2.